A 1068-amino-acid polypeptide reads, in one-letter code: Retinoblastoma-like protein 1 (1068 aa).

Position 332 is a phosphothreonine; by CDK2 (Thr-332). Thr-369 is modified (phosphothreonine; by CDK4). Residue Thr-385 is modified to Phosphothreonine; by CDK2. The segment at 385 to 584 (TPVASATQSV…WEALQVSANK (200 aa)) is domain A. The pocket; binds T and E1A stretch occupies residues 385 to 949 (TPVASATQSV…GRVKSFALKY (565 aa)). The interval 585-780 (VPTCEEVIFP…AQEVHSTGIN (196 aa)) is spacer. A Phosphoserine; by CDK2 and CDK4 modification is found at Ser-640. Residues Ser-650 and Ser-749 each carry the phosphoserine modification. A Phosphoserine; by CDK2 modification is found at Ser-762. Residues 781–949 (RPKRTGSLAL…GRVKSFALKY (169 aa)) form a domain B region. Phosphoserine; by CDK2 and CDK4 occurs at positions 964 and 975. A Phosphoserine; by CDK2 modification is found at Ser-988. Position 997 is a phosphothreonine; by CDK2 (Thr-997). Phosphoserine; by CDK2 is present on Ser-1009. Ser-1041 carries the phosphoserine modification.

Belongs to the retinoblastoma protein (RB) family. Component of the DREAM complex (also named LINC complex) at least composed of E2F4, E2F5, LIN9, LIN37, LIN52, LIN54, MYBL1, MYBL2, RBL1, RBL2, RBBP4, TFDP1 and TFDP2. The complex exists in quiescent cells where it represses cell cycle-dependent genes. It dissociates in S phase when LIN9, LIN37, LIN52 and LIN54 form a subcomplex that binds to MYBL2. Interacts with AATF. Interacts with KDM5A. Interacts with KMT5B and KMT5C. Interacts with USP4. Interacts with RBBP9. In terms of assembly, (Microbial infection) Interacts with SV40 and JC virus large T antigens. Large T antigen, but not E1A, binds only to the unphosphorylated form. As to quaternary structure, (Microbial infection) Interacts with JC virus small t antigen. Cell-cycle arrest properties are inactivated by phosphorylation on Thr-332, Ser-640, Ser-964 and Ser-975 by CDK4.

The protein resides in the nucleus. Functionally, key regulator of entry into cell division. Directly involved in heterochromatin formation by maintaining overall chromatin structure and, in particular, that of constitutive heterochromatin by stabilizing histone methylation. Recruits and targets histone methyltransferases KMT5B and KMT5C, leading to epigenetic transcriptional repression. Controls histone H4 'Lys-20' trimethylation. Probably acts as a transcription repressor by recruiting chromatin-modifying enzymes to promoters. Potent inhibitor of E2F-mediated trans-activation. May act as a tumor suppressor. The sequence is that of Retinoblastoma-like protein 1 (RBL1) from Homo sapiens (Human).